A 411-amino-acid polypeptide reads, in one-letter code: Lissencephaly-1 homolog (411 aa).

The 33-residue stretch at 9–41 folds into the LisH domain; it reads QREELNQAIADYLGSNGYADSLETFRKEADLST. Positions 56-83 form a coiled coil; that stretch reads TSVIRLQKKVMDLEAKLTEAEKEVIEGA. WD repeat units follow at residues 106–147, 148–187, 191–230, 233–272, 275–334, 337–376, and 379–411; these read GHRA…RSLK, GHTD…ECVK, GHDH…CVKT, GHRE…CKVE, DHEH…CLLT, GHDN…CMKT, and AHQH…WECR.

It belongs to the WD repeat LIS1/nudF family.

It localises to the cytoplasm. It is found in the cytoskeleton. The protein resides in the microtubule organizing center. The protein localises to the centrosome. Positively regulates the activity of the minus-end directed microtubule motor protein dynein. May enhance dynein-mediated microtubule sliding by targeting dynein to the microtubule plus end. Required for several dynein- and microtubule-dependent processes. The sequence is that of Lissencephaly-1 homolog from Drosophila mojavensis (Fruit fly).